Consider the following 316-residue polypeptide: protein SLOW GREEN 1, chloroplastic (316 aa).

A chloroplast-targeting transit peptide spans 1-39 (MISSLSASSSLVSSFVAVKATPVTGPLIPRRDLLSIRIR). 4 TPR repeats span residues 118–151 (VETL…QPEE), 152–185 (TEWK…NPLS), 226–259 (RDVR…DPKD), and 261–293 (RPYF…SPKK).

Ubiquitous. Preferentially expressed in newly formed green tissues.

The protein resides in the plastid. It localises to the chloroplast. In terms of biological role, required for the early stage of chloroplast development. May be involved in chloroplast protein biosynthesis and/or degradation. This is protein SLOW GREEN 1, chloroplastic from Arabidopsis thaliana (Mouse-ear cress).